A 445-amino-acid chain; its full sequence is Phosphoglucosamine mutase (445 aa).

S99 functions as the Phosphoserine intermediate in the catalytic mechanism. Mg(2+) contacts are provided by S99, D242, D244, and D246. The residue at position 99 (S99) is a Phosphoserine.

It belongs to the phosphohexose mutase family. Requires Mg(2+) as cofactor. In terms of processing, activated by phosphorylation.

The enzyme catalyses alpha-D-glucosamine 1-phosphate = D-glucosamine 6-phosphate. Functionally, catalyzes the conversion of glucosamine-6-phosphate to glucosamine-1-phosphate. This Campylobacter jejuni (strain RM1221) protein is Phosphoglucosamine mutase.